A 911-amino-acid chain; its full sequence is DNA mismatch repair protein MutS (911 aa).

Residues 1–10 (MDNKTDHKND) are compositionally biased toward basic and acidic residues. Residues 1-24 (MDNKTDHKNDLNSQPVPSSAPHKE) are disordered. 662-669 (GPNMGGKS) is an ATP binding site.

This sequence belongs to the DNA mismatch repair MutS family.

Its function is as follows. This protein is involved in the repair of mismatches in DNA. It is possible that it carries out the mismatch recognition step. This protein has a weak ATPase activity. The protein is DNA mismatch repair protein MutS of Bartonella quintana (strain Toulouse) (Rochalimaea quintana).